The primary structure comprises 628 residues: Glutamyl-tRNA(Gln) amidotransferase subunit E (628 aa).

The protein belongs to the GatB/GatE family. GatE subfamily. Heterodimer of GatD and GatE.

It catalyses the reaction L-glutamyl-tRNA(Gln) + L-glutamine + ATP + H2O = L-glutaminyl-tRNA(Gln) + L-glutamate + ADP + phosphate + H(+). Functionally, allows the formation of correctly charged Gln-tRNA(Gln) through the transamidation of misacylated Glu-tRNA(Gln) in organisms which lack glutaminyl-tRNA synthetase. The reaction takes place in the presence of glutamine and ATP through an activated gamma-phospho-Glu-tRNA(Gln). The GatDE system is specific for glutamate and does not act on aspartate. This Pyrococcus furiosus (strain ATCC 43587 / DSM 3638 / JCM 8422 / Vc1) protein is Glutamyl-tRNA(Gln) amidotransferase subunit E.